Here is a 517-residue protein sequence, read N- to C-terminus: BTB/POZ domain-containing protein At3g49900 (517 aa).

Residues 28 to 37 (SSSSSSLSLS) are compositionally biased toward low complexity. The segment at 28–49 (SSSSSSLSLSPKQPINLSSSPS) is disordered. Residues 38–49 (PKQPINLSSSPS) are compositionally biased toward polar residues. A BTB domain is found at 67-130 (PDVFVNVGGT…CYGAHIELTP (64 aa)). Positions 224–307 (LPAGDFNVVA…VRAMLQEQLN (84 aa)) constitute an NPH3 domain. The segment at 409–456 (ARSASFHCVHQPSNVNKTQRGDRGSVSNLSTTYRRRRASPPQAQPQKS) is disordered.

This sequence belongs to the NPH3 family.

Its pathway is protein modification; protein ubiquitination. Its function is as follows. May act as a substrate-specific adapter of an E3 ubiquitin-protein ligase complex (CUL3-RBX1-BTB) which mediates the ubiquitination and subsequent proteasomal degradation of target proteins. This chain is BTB/POZ domain-containing protein At3g49900, found in Arabidopsis thaliana (Mouse-ear cress).